The chain runs to 772 residues: Potassium transporter 24 (772 aa).

Topologically, residues 1-23 (MDVEGGGAAARRKGGWWWWREEA) are cytoplasmic. The helical transmembrane segment at 24-44 (VLAYQSLGVVYGEVAAAPLYV) threads the bilayer. Topologically, residues 45-66 (YRSAFAGGDIEHSAGNEEIYGA) are extracellular. The helical transmembrane segment at 67–87 (LSLVFWTLTLVPLAKYVLLVL) threads the bilayer. Residues 88–150 (RADDAGEGGT…ALERHRVLQR (63 aa)) are Cytoplasmic-facing. A helical transmembrane segment spans residues 151 to 171 (LLLLLALLGTCMVIGDGVLTP). The Extracellular portion of the chain corresponds to 172 to 192 (AVSVFSAVSGLELSMDKDQHK). Residues 193–213 (YILLPITCVILVCLFALQHYG) form a helical membrane-spanning segment. The Cytoplasmic segment spans residues 214–216 (THR). A helical membrane pass occupies residues 217–237 (VGFLFAPIVCLWLLCISIIGV). Residues 238–265 (YNIIHWNPHVYQALSPYYMYKFLRKTQT) lie on the Extracellular side of the membrane. A helical transmembrane segment spans residues 266 to 286 (GGWMSLGGILLCVTGSEAMYA). Topologically, residues 287–298 (DLGHFTQNSIKM) are cytoplasmic. Residues 299 to 319 (AFTLLVYPALVLAYMGQAAYI) form a helical membrane-spanning segment. Topologically, residues 320–344 (SRHHNFEDGSHIGFYVSVPEKIRWP) are extracellular. A helical membrane pass occupies residues 345–365 (VLGIAILASVVGSQAIITGTF). Over 366-392 (SIIKQCSSLNCFPRVKIVHTSSTVHGQ) the chain is Cytoplasmic. The helical transmembrane segment at 393–413 (IYIPEINWILMILCLSVTIGF) threads the bilayer. Over 414–423 (RDTKHLTNAQ) the chain is Extracellular. Residues 424–444 (GLAVITVMLVTTCLMSLVILL) traverse the membrane as a helical segment. At 445 to 449 (CWNKS) the chain is on the cytoplasmic side. Residues 450–470 (IVYALSFLLFFGAIEVIYFAA) traverse the membrane as a helical segment. Topologically, residues 471–477 (SLVKFHE) are extracellular. Residues 478-498 (GAWVPVTLSFIFMMVMCVWHY) traverse the membrane as a helical segment. Residues 499–772 (GTKKKYEFDV…TVEVGMICLV (274 aa)) lie on the Cytoplasmic side of the membrane. The disordered stretch occupies residues 656-684 (EEGEFDGSDSTGSSAHKEINPNTTAPKPK).

The protein belongs to the HAK/KUP transporter (TC 2.A.72.3) family.

The protein localises to the membrane. Functionally, high-affinity potassium transporter. In Oryza sativa subsp. japonica (Rice), this protein is Potassium transporter 24 (HAK24).